The primary structure comprises 142 residues: Baculoviral IAP repeat-containing protein 5 (142 aa).

Residues 18-88 (RISTFKNWPF…KHSSGCAFLS (71 aa)) form a BIR repeat. Phosphoserine; by AURKC is present on S20. At K23 the chain carries N6-acetyllysine. A Phosphothreonine; by CDK1 and CDK15 modification is found at T34. T48 is modified (phosphothreonine). Residues C57, C60, H77, and C84 each coordinate Zn(2+). K90, K110, K112, and K115 each carry N6-acetyllysine. Phosphothreonine; by AURKB is present on T117. K129 carries the post-translational modification N6-acetyllysine.

This sequence belongs to the IAP family. Monomer or homodimer. Exists as a homodimer in the apo state and as a monomer in the CPC-bound state. The monomer protects cells against apoptosis more efficiently than the dimer. Only the dimeric form is capable of enhancing tubulin stability in cells. When phosphorylated, interacts with LAMTOR5/HBXIP; the resulting complex binds pro-CASP9, as well as active CASP9, but much less efficiently. Component of the chromosomal passenger complex (CPC) composed of at least BIRC5/survivin, CDCA8/borealin, INCENP, AURKB or AURKC; in the complex forms a triple-helix bundle-based subcomplex with INCENP and CDCA8. Interacts with JTB. Interacts (via BIR domain) with histone H3 phosphorylated at 'Thr-3' (H3pT3). Interacts with EVI5. Interacts with GTP-bound RAN in both the S and M phases of the cell cycle. Interacts with USP9X. Interacts with tubulin. Interacts with BIRC2/c-IAP1. The acetylated form at Lys-129 interacts with STAT3. The monomeric form deacetylated at Lys-129 interacts with XPO1/CRM1. The monomeric form interacts with XIAP/BIRC4. Both the dimeric and monomeric form can interact with DIABLO/SMAC. Interacts with BIRC6/bruce. Interacts with FBXL7; this interaction facilitates the polyubiquitination and subsequent proteasomal degradation of BIRC5 by the SCF(FBXL7) E3 ubiquitin-protein ligase complex. Post-translationally, ubiquitinated by the Cul9-RING ubiquitin-protein ligase complex, leading to its degradation. Ubiquitination is required for centrosomal targeting. Deubiquitinated by USP35 or USP38; leading to stabilization. Acetylation at Lys-129 results in its homodimerization, while deacetylation promotes the formation of monomers which heterodimerize with XPO1/CRM1 which facilitates its nuclear export. The acetylated form represses STAT3 transactivation. The dynamic equilibrium between its acetylation and deacetylation at Lys-129 determines its interaction with XPO1/CRM1, its subsequent subcellular localization, and its ability to inhibit STAT3 transactivation. In terms of processing, in vitro phosphorylation at Thr-117 by AURKB prevents interaction with INCENP and localization to mitotic chromosomes. Phosphorylation at Thr-48 by CK2 is critical for its mitotic and anti-apoptotic activities. Phosphorylation at Thr-34 by CDK15 is critical for its anti-apoptotic activity. Phosphorylation at Ser-20 by AURKC is critical for regulation of proper chromosome alignment and segregation, and possibly cytokinesis.

The protein localises to the cytoplasm. It localises to the nucleus. It is found in the chromosome. The protein resides in the centromere. Its subcellular location is the cytoskeleton. The protein localises to the spindle. It localises to the kinetochore. It is found in the midbody. Its function is as follows. Multitasking protein that has dual roles in promoting cell proliferation and preventing apoptosis. Component of a chromosome passage protein complex (CPC) which is essential for chromosome alignment and segregation during mitosis and cytokinesis. Acts as an important regulator of the localization of this complex; directs CPC movement to different locations from the inner centromere during prometaphase to midbody during cytokinesis and participates in the organization of the center spindle by associating with polymerized microtubules. Involved in the recruitment of CPC to centromeres during early mitosis via association with histone H3 phosphorylated at 'Thr-3' (H3pT3) during mitosis. The complex with RAN plays a role in mitotic spindle formation by serving as a physical scaffold to help deliver the RAN effector molecule TPX2 to microtubules. May counteract a default induction of apoptosis in G2/M phase. The acetylated form represses STAT3 transactivation of target gene promoters. May play a role in neoplasia. Inhibitor of CASP3 and CASP7. Essential for the maintenance of mitochondrial integrity and function. In Felis catus (Cat), this protein is Baculoviral IAP repeat-containing protein 5 (BIRC5).